The chain runs to 428 residues: Putative zinc metalloprotease SAR1238 (428 aa).

His21 provides a ligand contact to Zn(2+). The active site involves Glu22. Position 25 (His25) interacts with Zn(2+). A run of 4 helical transmembrane segments spans residues Phe172 to Ala194, Gly309 to Phe331, Ile352 to Ile374, and Thr401 to Trp420. The 84-residue stretch at Ala186–Lys269 folds into the PDZ domain.

The protein belongs to the peptidase M50B family. Zn(2+) serves as cofactor.

Its subcellular location is the cell membrane. The polypeptide is Putative zinc metalloprotease SAR1238 (Staphylococcus aureus (strain MRSA252)).